The following is a 338-amino-acid chain: Probable family 20 transposase (338 aa).

Belongs to the transposase 20 family.

Required for the transposition of an insertion element. The polypeptide is Probable family 20 transposase (Pseudomonas aeruginosa (strain ATCC 15692 / DSM 22644 / CIP 104116 / JCM 14847 / LMG 12228 / 1C / PRS 101 / PAO1)).